The primary structure comprises 907 residues: Protein translocase subunit SecA (907 aa).

Residues Gln87, Gly105–Thr109, and Asp506 each bind ATP. Positions Leu834 to Lys850 are enriched in basic and acidic residues. Residues Leu834–Glu907 form a disordered region. A compositionally biased stretch (low complexity) spans Gln864–Pro875. Cys891, Cys893, Cys902, and His903 together coordinate Zn(2+). Residues Lys897–Glu907 show a composition bias toward basic residues.

It belongs to the SecA family. In terms of assembly, monomer and homodimer. Part of the essential Sec protein translocation apparatus which comprises SecA, SecYEG and auxiliary proteins SecDF-YajC and YidC. It depends on Zn(2+) as a cofactor.

It is found in the cell inner membrane. The protein resides in the cytoplasm. The enzyme catalyses ATP + H2O + cellular proteinSide 1 = ADP + phosphate + cellular proteinSide 2.. Part of the Sec protein translocase complex. Interacts with the SecYEG preprotein conducting channel. Has a central role in coupling the hydrolysis of ATP to the transfer of proteins into and across the cell membrane, serving both as a receptor for the preprotein-SecB complex and as an ATP-driven molecular motor driving the stepwise translocation of polypeptide chains across the membrane. This is Protein translocase subunit SecA from Alcanivorax borkumensis (strain ATCC 700651 / DSM 11573 / NCIMB 13689 / SK2).